We begin with the raw amino-acid sequence, 662 residues long: UvrABC system protein B (662 aa).

Residues 31–188 (DNIEGGEKAQ…NDLVDIQFER (158 aa)) form the Helicase ATP-binding domain. Position 44 to 51 (44 to 51 (GATGTGKT)) interacts with ATP. The short motif at 97–120 (YYDYYQPEAYVPSSDTYIEKDSSV) is the Beta-hairpin element. Positions 435–601 (QIDDLLGEIN…TIKKEIRDLI (167 aa)) constitute a Helicase C-terminal domain. Positions 626–661 (KELVKKLEKQMQEAVEVLDFELAAQIRDMMLEVKAL) constitute a UVR domain.

It belongs to the UvrB family. Forms a heterotetramer with UvrA during the search for lesions. Interacts with UvrC in an incision complex.

The protein localises to the cytoplasm. Its function is as follows. The UvrABC repair system catalyzes the recognition and processing of DNA lesions. A damage recognition complex composed of 2 UvrA and 2 UvrB subunits scans DNA for abnormalities. Upon binding of the UvrA(2)B(2) complex to a putative damaged site, the DNA wraps around one UvrB monomer. DNA wrap is dependent on ATP binding by UvrB and probably causes local melting of the DNA helix, facilitating insertion of UvrB beta-hairpin between the DNA strands. Then UvrB probes one DNA strand for the presence of a lesion. If a lesion is found the UvrA subunits dissociate and the UvrB-DNA preincision complex is formed. This complex is subsequently bound by UvrC and the second UvrB is released. If no lesion is found, the DNA wraps around the other UvrB subunit that will check the other stand for damage. The chain is UvrABC system protein B from Streptococcus pneumoniae (strain Hungary19A-6).